The chain runs to 851 residues: Meiotically up-regulated gene 87 protein (851 aa).

The protein belongs to the nucleoporin interacting component (NIC) family.

Its subcellular location is the nucleus envelope. In terms of biological role, has a role in meiosis. This Schizosaccharomyces pombe (strain 972 / ATCC 24843) (Fission yeast) protein is Meiotically up-regulated gene 87 protein (mug87).